The primary structure comprises 193 residues: Urease accessory protein UreE (193 aa).

Residues 138–193 form a disordered region; sequence RGAYHSHGAHSHDQGHAAHDHGNEHKHDHGHDHVHGPGCDHDHDHDHGHHHDHKHD. A compositionally biased stretch (basic and acidic residues) spans 147–193; it reads HSHDQGHAAHDHGNEHKHDHGHDHVHGPGCDHDHDHDHGHHHDHKHD.

The protein belongs to the UreE family.

It localises to the cytoplasm. Functionally, involved in urease metallocenter assembly. Binds nickel. Probably functions as a nickel donor during metallocenter assembly. This is Urease accessory protein UreE from Rhizobium leguminosarum bv. trifolii (strain WSM2304).